The following is a 445-amino-acid chain: tRNA(Ile)-lysidine synthase (445 aa).

38-43 (SGGLDS) contributes to the ATP binding site.

The protein belongs to the tRNA(Ile)-lysidine synthase family.

It localises to the cytoplasm. It carries out the reaction cytidine(34) in tRNA(Ile2) + L-lysine + ATP = lysidine(34) in tRNA(Ile2) + AMP + diphosphate + H(+). In terms of biological role, ligates lysine onto the cytidine present at position 34 of the AUA codon-specific tRNA(Ile) that contains the anticodon CAU, in an ATP-dependent manner. Cytidine is converted to lysidine, thus changing the amino acid specificity of the tRNA from methionine to isoleucine. In Neisseria gonorrhoeae (strain ATCC 700825 / FA 1090), this protein is tRNA(Ile)-lysidine synthase.